The chain runs to 206 residues: Probable thymidylate kinase (206 aa).

G10–S17 provides a ligand contact to ATP.

This sequence belongs to the thymidylate kinase family.

It carries out the reaction dTMP + ATP = dTDP + ADP. The protein is Probable thymidylate kinase of Methanosarcina acetivorans (strain ATCC 35395 / DSM 2834 / JCM 12185 / C2A).